The chain runs to 261 residues: Transmembrane protein 106A (261 aa).

Positions 1–23 (MGKAVSQLTSRKDEDKPILPDNP) are disordered. The helical transmembrane segment at 93 to 113 (LFVFLSVAICLLIFSLTIFFL) threads the bilayer.

This sequence belongs to the TMEM106 family. In terms of tissue distribution, expressed in liver, spleen, lung, kidney, lymph nodes and adipose tissue (at protein level). Expressed by macrophages.

Its subcellular location is the cell membrane. Its function is as follows. Activates macrophages and polarizes them into M1-like macrophages through the activation of the MAPK and NF-kappaB signaling pathway. Upon activation, up-regulates the expression of CD80, CD86, CD69 and MHC II on macrophages, and induces the release of pro-inflammatory cytokines such as TNF, IL1B, IL6, CCL2 and nitric oxide. May play a role in inhibition of proliferation and migration. The chain is Transmembrane protein 106A (Tmem106a) from Mus musculus (Mouse).